The primary structure comprises 162 residues: Cyclic pyranopterin monophosphate synthase (162 aa).

Residues 75-77 (LCH) and 113-114 (ME) each bind substrate. Aspartate 128 is a catalytic residue.

The protein belongs to the MoaC family. As to quaternary structure, homohexamer; trimer of dimers.

It carries out the reaction (8S)-3',8-cyclo-7,8-dihydroguanosine 5'-triphosphate = cyclic pyranopterin phosphate + diphosphate. The protein operates within cofactor biosynthesis; molybdopterin biosynthesis. Catalyzes the conversion of (8S)-3',8-cyclo-7,8-dihydroguanosine 5'-triphosphate to cyclic pyranopterin monophosphate (cPMP). The sequence is that of Cyclic pyranopterin monophosphate synthase from Burkholderia orbicola (strain MC0-3).